The following is a 236-amino-acid chain: Peroxisomal membrane protein PMP27 (236 aa).

The protein belongs to the peroxin-11 family. Homooligomer. Interacts with PEX34.

Its subcellular location is the peroxisome membrane. In terms of biological role, involved in peroxisomal proliferation. Promotes peroxisome division and biogenesis. In Saccharomyces cerevisiae (strain ATCC 204508 / S288c) (Baker's yeast), this protein is Peroxisomal membrane protein PMP27 (PEX11).